The chain runs to 172 residues: Adenine phosphoribosyltransferase (172 aa).

This sequence belongs to the purine/pyrimidine phosphoribosyltransferase family. As to quaternary structure, homodimer.

The protein resides in the cytoplasm. It catalyses the reaction AMP + diphosphate = 5-phospho-alpha-D-ribose 1-diphosphate + adenine. Its pathway is purine metabolism; AMP biosynthesis via salvage pathway; AMP from adenine: step 1/1. Functionally, catalyzes a salvage reaction resulting in the formation of AMP, that is energically less costly than de novo synthesis. The protein is Adenine phosphoribosyltransferase of Roseiflexus castenholzii (strain DSM 13941 / HLO8).